Here is a 325-residue protein sequence, read N- to C-terminus: Tumor necrosis factor soluble receptor (325 aa).

The N-terminal stretch at 1–16 (MLRLIALLVCVVYVYG) is a signal peptide. TNFR-Cys repeat units follow at residues 27–62 (KCGG…TVCS), 63–104 (PCED…DRVC), 105–147 (NCST…TLCE), and 148–186 (KCPP…TSCT). 6 cysteine pairs are disulfide-bonded: Cys28/Cys39, Cys40/Cys53, Cys43/Cys61, Cys64/Cys79, Cys82/Cys96, and Cys86/Cys104. The N-linked (GlcNAc...) asparagine; by host glycan is linked to Asn105. Disulfide bonds link Cys106–Cys120, Cys123–Cys146, Cys129–Cys149, and Cys164–Cys185. N-linked (GlcNAc...) asparagine; by host glycosylation is found at Asn181, Asn205, and Asn238.

Binds to TNF-alpha and beta. Probably prevents TNF to reach cellular target and thereby deampening the potential antiviral effects of the cytokine. The sequence is that of Tumor necrosis factor soluble receptor from Oryctolagus cuniculus (Rabbit).